Reading from the N-terminus, the 429-residue chain is Histidine--tRNA ligase (429 aa).

The protein belongs to the class-II aminoacyl-tRNA synthetase family. In terms of assembly, homodimer.

The protein localises to the cytoplasm. It carries out the reaction tRNA(His) + L-histidine + ATP = L-histidyl-tRNA(His) + AMP + diphosphate + H(+). The sequence is that of Histidine--tRNA ligase from Oceanobacillus iheyensis (strain DSM 14371 / CIP 107618 / JCM 11309 / KCTC 3954 / HTE831).